A 576-amino-acid chain; its full sequence is Aspartate--tRNA ligase (576 aa).

Glutamate 173 is an L-aspartate binding site. Residues 197-200 (QLFK) are aspartate. Arginine 219 is an L-aspartate binding site. Residues 219–221 (RDE) and glutamine 228 each bind ATP. Position 438 (histidine 438) interacts with L-aspartate. ATP is bound at residue glutamate 470. Arginine 477 provides a ligand contact to L-aspartate. Residue 522–525 (GLDR) coordinates ATP.

This sequence belongs to the class-II aminoacyl-tRNA synthetase family. Type 1 subfamily. As to quaternary structure, homodimer.

Its subcellular location is the cytoplasm. The catalysed reaction is tRNA(Asp) + L-aspartate + ATP = L-aspartyl-tRNA(Asp) + AMP + diphosphate. Its function is as follows. Catalyzes the attachment of L-aspartate to tRNA(Asp) in a two-step reaction: L-aspartate is first activated by ATP to form Asp-AMP and then transferred to the acceptor end of tRNA(Asp). In Aster yellows witches'-broom phytoplasma (strain AYWB), this protein is Aspartate--tRNA ligase.